The primary structure comprises 173 residues: Putative metal-dependent hydrolase BCE33L2441 (173 aa).

Positions 65, 156, and 160 each coordinate Zn(2+).

It belongs to the metal hydrolase YfiT family. As to quaternary structure, homodimer. Zn(2+) is required as a cofactor.

It localises to the cytoplasm. Its function is as follows. Possible metal-dependent hydrolase. The chain is Putative metal-dependent hydrolase BCE33L2441 from Bacillus cereus (strain ZK / E33L).